The sequence spans 270 residues: LIM zinc-binding domain-containing Nebulette (270 aa).

Residues 3-63 form the LIM zinc-binding domain; sequence PQCARCGKVV…NAHYPKQSFT (61 aa). A Nebulin 1 repeat occupies 61-95; sequence SFTTVADTPENLRLKQQSELQSQVKYKRDFEESKG. Arg-96 carries the omega-N-methylarginine modification. The stretch at 97 to 131 is one Nebulin 2 repeat; that stretch reads GFSIVTDTPELQRLKRTQEQISNVKYHEDFEKTKG. Arg-132 carries the omega-N-methylarginine modification. Residues 133 to 159 form a Nebulin 3 repeat; the sequence is GFTPVVDDPVTERVRKSTQVVSDAAYK. Thr-135 is modified (phosphothreonine). Positions 210–270 constitute an SH3 domain; the sequence is AHLRTYRAMY…LPANYIEFVN (61 aa). The residue at position 230 (Ser-230) is a Phosphoserine.

It localises to the cytoplasm. In terms of biological role, binds to actin and plays an important role in the assembly of the Z-disk. Isoform 2 might play a role in the assembly of focal adhesion. This is LIM zinc-binding domain-containing Nebulette (Nebl) from Mus musculus (Mouse).